Consider the following 465-residue polypeptide: Cysteine--tRNA ligase (465 aa).

Residue cysteine 30 coordinates Zn(2+). The short motif at 32–42 (MTVYDYCHVGH) is the 'HIGH' region element. Zn(2+) contacts are provided by cysteine 214, histidine 239, and glutamate 243. A 'KMSKS' region motif is present at residues 271 to 275 (KMSKS). Lysine 274 contacts ATP.

This sequence belongs to the class-I aminoacyl-tRNA synthetase family. Monomer. Requires Zn(2+) as cofactor.

The protein localises to the cytoplasm. It carries out the reaction tRNA(Cys) + L-cysteine + ATP = L-cysteinyl-tRNA(Cys) + AMP + diphosphate. This chain is Cysteine--tRNA ligase, found in Paraburkholderia xenovorans (strain LB400).